A 401-amino-acid chain; its full sequence is Rab-interacting lysosomal protein (401 aa).

An RH1 domain is found at 11–101 (PGWGSREAAG…REENERLRRE (91 aa)). Residues 75 to 181 (DSLQVSAQPA…AQDRERERQQ (107 aa)) adopt a coiled-coil conformation. Disordered stretches follow at residues 167 to 239 (TQLR…SEAG) and 304 to 388 (KMLG…SALH). Basic and acidic residues predominate over residues 172-181 (AQDRERERQQ). In terms of domain architecture, RH2 spans 240 to 316 (QCRFSREEFE…GTPEEAESSE (77 aa)). The tract at residues 272 to 333 (FQRELLTDHR…LLSDDKGDHP (62 aa)) is necessary for interaction with RAB7A and RAB34, lysosomal distribution and morphology. T308 is subject to Phosphothreonine. Positions 310-319 (EEAESSEDEA) are enriched in acidic residues. S314 and S315 each carry phosphoserine.

Homodimer. Interacts with RAB7A. Interacts with RAB34. Identified in a complex with MREG and DCTN1; interacts directly with MREG. Interacts with CLN3. Interacts with FLCN; the interaction is direct and promotes association between RILP and RAB34. Ubiquitous. Strongly expressed in fetal heart, heart, stomach, spleen, adrenal gland, thyroid gland, salivary gland, fetal liver, liver and lung. Poorly expressed in brain.

The protein localises to the late endosome membrane. It localises to the lysosome membrane. The protein resides in the cytoplasmic vesicle. Its subcellular location is the phagosome membrane. Functionally, rab effector playing a role in late endocytic transport to degradative compartments. Involved in the regulation of lysosomal morphology and distribution. Induces recruitment of dynein-dynactin motor complexes to Rab7A-containing late endosome and lysosome compartments. Promotes centripetal migration of phagosomes and the fusion of phagosomes with the late endosomes and lysosomes. The polypeptide is Rab-interacting lysosomal protein (RILP) (Homo sapiens (Human)).